Here is a 27-residue protein sequence, read N- to C-terminus: Metallothionein-like protein CAP5 (27 aa).

The span at 1 to 18 shows a compositional bias: low complexity; it reads MAPCSCKSCGTSCAGSCT. The interval 1 to 27 is disordered; that stretch reads MAPCSCKSCGTSCAGSCTSCSCGSCSH. 7 residues coordinate Cu(+): C4, C6, C9, C13, C20, C22, and C25.

It belongs to the metallothionein superfamily. Type 8 family.

The chain is Metallothionein-like protein CAP5 (CAP5) from Colletotrichum gloeosporioides (Anthracnose fungus).